The sequence spans 621 residues: Uptake hydrogenase large subunit (621 aa).

Positions 75, 78, 600, and 603 each coordinate Ni(2+).

Belongs to the [NiFe]/[NiFeSe] hydrogenase large subunit family. As to quaternary structure, heterodimer of a large and a small subunit. It depends on Ni(2+) as a cofactor.

Its subcellular location is the cell membrane. It carries out the reaction H2 + A = AH2. In terms of biological role, this enzyme recycles the H(2) produced by nitrogenase to increase the production of ATP and to protect nitrogenase against inhibition or damage by O(2) under carbon- or phosphate-limited conditions. The protein is Uptake hydrogenase large subunit (hupL) of Alcaligenes hydrogenophilus.